We begin with the raw amino-acid sequence, 730 residues long: S-adenosyl-L-methionine-dependent tRNA 4-demethylwyosine synthase TYW1 (730 aa).

One can recognise a Flavodoxin-like domain in the interval 79–237 (VKVFYGSQTG…DFQVWKGKFL (159 aa)). FMN contacts are provided by residues 85 to 89 (SQTGT) and 176 to 208 (VFGL…ARIM). Residues 253 to 351 (GNCKKASCKN…RKSECEEERR (99 aa)) are disordered. The span at 267 to 282 (KEEAEDNHSLAEKNNS) shows a compositional bias: basic and acidic residues. The segment covering 283–297 (EEELMESSSDEESSS) has biased composition (acidic residues). Basic and acidic residues predominate over residues 333–351 (SQRVKQNGERKSECEEERR). A Radical SAM core domain is found at 398-642 (YGIESHRCME…ANLLPDYEIA (245 aa)). [4Fe-4S] cluster-binding residues include cysteine 414, cysteine 418, and cysteine 421.

The protein belongs to the TYW1 family. The cofactor is [4Fe-4S] cluster.

The catalysed reaction is N(1)-methylguanosine(37) in tRNA(Phe) + pyruvate + S-adenosyl-L-methionine = 4-demethylwyosine(37) in tRNA(Phe) + 5'-deoxyadenosine + L-methionine + CO2 + H2O. It functions in the pathway tRNA modification; wybutosine-tRNA(Phe) biosynthesis. Probable component of the wybutosine biosynthesis pathway. Wybutosine is a hyper modified guanosine with a tricyclic base found at the 3'-position adjacent to the anticodon of eukaryotic phenylalanine tRNA. Catalyzes the condensation of N-methylguanine with 2 carbon atoms from pyruvate to form the tricyclic 4-demethylwyosine, an intermediate in wybutosine biosynthesis. The protein is S-adenosyl-L-methionine-dependent tRNA 4-demethylwyosine synthase TYW1 (tyw1) of Danio rerio (Zebrafish).